A 178-amino-acid chain; its full sequence is Inorganic pyrophosphatase (178 aa).

3 residues coordinate substrate: K30, R44, and Y56. Residues D66, D71, and D103 each contribute to the Mg(2+) site. Residue Y140 coordinates substrate.

This sequence belongs to the PPase family. Homohexamer. Mg(2+) is required as a cofactor.

The protein localises to the cytoplasm. It carries out the reaction diphosphate + H2O = 2 phosphate + H(+). Its function is as follows. Catalyzes the hydrolysis of inorganic pyrophosphate (PPi) forming two phosphate ions. In Pyrococcus furiosus (strain ATCC 43587 / DSM 3638 / JCM 8422 / Vc1), this protein is Inorganic pyrophosphatase.